The chain runs to 590 residues: FAD-linked oxidoreductase malF (590 aa).

Positions 1-18 (MKYTATFALLILAIGIQT) are cleaved as a signal peptide. 5 N-linked (GlcNAc...) asparagine glycosylation sites follow: N44, N80, N103, N178, and N396. In terms of domain architecture, FAD-binding PCMH-type spans 117–303 (AQGRIPLYSA…TSVTLRAFAD (187 aa)).

Belongs to the oxygen-dependent FAD-linked oxidoreductase family. FAD serves as cofactor.

In terms of biological role, FAD-linked oxidoreductase; part of the gene cluster that mediates the biosynthesis of malbrancheamide, a dichlorinated fungal indole alkaloid that belongs to a family of natural products containing a characteristic bicyclo[2.2.2]diazaoctane core. The first step of malbrancheamide biosynthesis involves coupling of L-proline and L-tryptophan by malG, a bimodular NRPS, to produce L-Pro-L-Trp aldehyde through reductive offloading. This compound undergoes spontaneous cyclization and dehydration to give a dienamine which is reverse prenylated at C-2 by malE. The other prenyltransferase present in the cluster, malB, displays modest activity, suggesting that may be a redundant gene in the pathway. Subsequently, a [4+2] Diels-Alder cyclo-addition catalyzed by the bifunctional enzyme malC forms the characteristic bicyclo[2.2.2]diazaoctane ring of premalbrancheamid. Finally, the flavin-dependent halogenase malA catalyzes the iterative dichlorination of the indole ring of premalbrancheamide to yield C-9 monochlorinated malbrancheamide B, C-8 monochlorinated isomalbrancheamide B, and dichlorinated malbrancheamide. MalA is also able to brominate premalbrancheamide at C-9 to yield malbrancheamide C, and, to a lesser extend, at C-8 to yield isomalbrancheamide C. Finally, malA can brominate C-9 monochlorinated malbrancheamide B at C-8 to yield malbrancheamide D, or C-8 monochlorinated isomalbrancheamide B at C-9 to produce isomalbrancheamide D. The polypeptide is FAD-linked oxidoreductase malF (Malbranchea aurantiaca).